Here is a 982-residue protein sequence, read N- to C-terminus: Presequence protease, mitochondrial (982 aa).

Residues 1 to 7 constitute a mitochondrion transit peptide; sequence MFQIRNY. Histidine 84 provides a ligand contact to Zn(2+). Catalysis depends on glutamate 87, which acts as the Proton acceptor. Histidine 88 lines the Zn(2+) pocket. Glutamate 160 is an active-site residue. Residue glutamate 185 participates in Zn(2+) binding.

It belongs to the peptidase M16 family. PreP subfamily. As to quaternary structure, monomer and homodimer; homodimerization is induced by binding of the substrate. Zn(2+) serves as cofactor.

It localises to the mitochondrion intermembrane space. The protein resides in the mitochondrion matrix. Degrades mitochondrial transit peptides after their cleavage in the intermembrane space or in the matrix, and presequence peptides; clearance of these peptides is required to keep the presequence processing machinery running. Preferentially cleaves the N-terminal side of paired basic amino acid residues. Also degrades other unstructured peptides. May function as an ATP-dependent peptidase as opposed to a metalloendopeptidase. The protein is Presequence protease, mitochondrial (CYM1) of Kluyveromyces lactis (strain ATCC 8585 / CBS 2359 / DSM 70799 / NBRC 1267 / NRRL Y-1140 / WM37) (Yeast).